The chain runs to 436 residues: 3-phosphoshikimate 1-carboxyvinyltransferase (436 aa).

Lys23, Ser24, and Arg28 together coordinate 3-phosphoshikimate. Lys23 contacts phosphoenolpyruvate. Phosphoenolpyruvate is bound by residues Gly97 and Arg126. Residues Ser171, Gln173, Asp323, and Lys350 each coordinate 3-phosphoshikimate. Gln173 provides a ligand contact to phosphoenolpyruvate. Asp323 acts as the Proton acceptor in catalysis. Residues Arg354 and Arg396 each contribute to the phosphoenolpyruvate site.

Belongs to the EPSP synthase family. In terms of assembly, monomer.

It localises to the cytoplasm. It carries out the reaction 3-phosphoshikimate + phosphoenolpyruvate = 5-O-(1-carboxyvinyl)-3-phosphoshikimate + phosphate. It functions in the pathway metabolic intermediate biosynthesis; chorismate biosynthesis; chorismate from D-erythrose 4-phosphate and phosphoenolpyruvate: step 6/7. Functionally, catalyzes the transfer of the enolpyruvyl moiety of phosphoenolpyruvate (PEP) to the 5-hydroxyl of shikimate-3-phosphate (S3P) to produce enolpyruvyl shikimate-3-phosphate and inorganic phosphate. The chain is 3-phosphoshikimate 1-carboxyvinyltransferase from Prochlorococcus marinus (strain MIT 9301).